Consider the following 417-residue polypeptide: NADH-quinone oxidoreductase subunit D (417 aa).

The protein belongs to the complex I 49 kDa subunit family. As to quaternary structure, NDH-1 is composed of 14 different subunits. Subunits NuoB, C, D, E, F, and G constitute the peripheral sector of the complex.

It is found in the cell inner membrane. It catalyses the reaction a quinone + NADH + 5 H(+)(in) = a quinol + NAD(+) + 4 H(+)(out). Functionally, NDH-1 shuttles electrons from NADH, via FMN and iron-sulfur (Fe-S) centers, to quinones in the respiratory chain. The immediate electron acceptor for the enzyme in this species is believed to be ubiquinone. Couples the redox reaction to proton translocation (for every two electrons transferred, four hydrogen ions are translocated across the cytoplasmic membrane), and thus conserves the redox energy in a proton gradient. This is NADH-quinone oxidoreductase subunit D from Coxiella burnetii (strain Dugway 5J108-111).